Reading from the N-terminus, the 563-residue chain is Inositol-3-phosphate synthase 1-A (563 aa).

The protein belongs to the myo-inositol 1-phosphate synthase family. Requires NAD(+) as cofactor.

The protein localises to the cytoplasm. The enzyme catalyses D-glucose 6-phosphate = 1D-myo-inositol 3-phosphate. It participates in polyol metabolism; myo-inositol biosynthesis; myo-inositol from D-glucose 6-phosphate: step 1/2. Functionally, key enzyme in myo-inositol biosynthesis pathway that catalyzes the conversion of glucose 6-phosphate to 1-myo-inositol 1-phosphate in a NAD-dependent manner. Rate-limiting enzyme in the synthesis of all inositol-containing compounds. This is Inositol-3-phosphate synthase 1-A (isyna1-a) from Xenopus laevis (African clawed frog).